The sequence spans 545 residues: Glucose-6-phosphate isomerase 1 (545 aa).

E356 acts as the Proton donor in catalysis. Active-site residues include H387 and K508.

This sequence belongs to the GPI family.

Its subcellular location is the cytoplasm. The catalysed reaction is alpha-D-glucose 6-phosphate = beta-D-fructose 6-phosphate. It functions in the pathway carbohydrate biosynthesis; gluconeogenesis. The protein operates within carbohydrate degradation; glycolysis; D-glyceraldehyde 3-phosphate and glycerone phosphate from D-glucose: step 2/4. Catalyzes the reversible isomerization of glucose-6-phosphate to fructose-6-phosphate. This is Glucose-6-phosphate isomerase 1 from Cupriavidus pinatubonensis (strain JMP 134 / LMG 1197) (Cupriavidus necator (strain JMP 134)).